A 384-amino-acid chain; its full sequence is MSPEVTLNRISPALSPFISSVVRNGKVGLDSTNCLRITDLKSGCTSLTPGPSCDRFKLHIPYAGETLKWDIIFNASYPELPPDFIFGEDAEFLPDPSALHNLSEWNPSDPECLLLVVKELVQQYHQYQCSRLSESSRLMFEYQTLQEEPQYGLNMEIYAGKKNNWTGEFSARFLLKMPVDFSNIPIYLLKDSNEDPGEDVALLSVSFEDAEATQVFPKLFLSPRIEHALGGSSALHIPVFPSGSCLIDYVPQVCQLLTNKVQYVIQGYHKRREYIAAFLSHFGTGVVEYDAEGFTKLTLLLSWKDFCFLVHTVDLPLYFPRDQPTLTFQSVYHFTNSGQLYSQAQKNYPYSPRWDGNEMAKRAKAYFRSFVPQFQEAAFANGKL.

UEV-like stretches follow at residues 30–147 and 275–365; these read DSTN…TLQE and IAAF…RAKA.

This sequence belongs to the BABAM2 family. Component of the ARISC complex, at least composed of uimc1/rap80, abraxas1, brcc3/brcc36, babam2 and babam1/nba1. Component of the BRCA1-A complex, at least composed of brca1, bard1, uimc1/rap80, abraxas1, brcc3/brcc36, babam2 and babam1/nba1. In the BRCA1-A complex, interacts directly with abraxas1, brcc3/brcc36 and babam1/nba1. Binds polyubiquitin. Component of the BRISC complex, at least composed of abraxas2, brcc3/brcc36, babam2 and babam1/nba1.

It localises to the cytoplasm. The protein localises to the nucleus. Functionally, component of the BRCA1-A complex, a complex that specifically recognizes 'Lys-63'-linked ubiquitinated histones H2A and H2AX at DNA lesions sites, leading to target the brca1-bard1 heterodimer to sites of DNA damage at double-strand breaks (DSBs). The BRCA1-A complex also possesses deubiquitinase activity that specifically removes 'Lys-63'-linked ubiquitin on histones H2A and H2AX. In the BRCA1-A complex, it acts as an adapter that bridges the interaction between babam1/nba1 and the rest of the complex, thereby being required for the complex integrity and modulating the E3 ubiquitin ligase activity of the brca1-bard1 heterodimer. Component of the BRISC complex, a multiprotein complex that specifically cleaves 'Lys-63'-linked ubiquitin in various substrates. Within the BRISC complex, acts as an adapter that bridges the interaction between babam1/nba1 and the rest of the complex, thereby being required for the complex integrity. The BRISC complex is required for normal mitotic spindle assembly and microtubule attachment to kinetochores via its role in deubiquitinating numa1. The BRISC complex plays a role in interferon signaling via its role in the deubiquitination of the interferon receptor ifnar1; deubiquitination increases ifnar1 activity by enhancing its stability and cell surface expression. Down-regulates the response to bacterial lipopolysaccharide (LPS) via its role in ifnar1 deubiquitination. May play a role in homeostasis or cellular differentiation in cells of neural, epithelial and germline origins. May also act as a death receptor-associated anti-apoptotic protein, which inhibits the mitochondrial apoptotic pathway. The polypeptide is BRISC and BRCA1-A complex member 2 (babam2) (Xenopus laevis (African clawed frog)).